An 823-amino-acid polypeptide reads, in one-letter code: Protein ROOT HAIR DEFECTIVE 3 homolog 2 (823 aa).

Residues 1–688 are Cytoplasmic-facing; sequence MEVPISGGGG…EAHRRSNNWL (688 aa). Residues 45-260 form the GB1/RHD3-type G domain; that stretch reads GLSYAVVSIV…IAPGGLAADR (216 aa). 55 to 62 contacts GTP; it reads GPQGSGKS. Residues 226-246 adopt a coiled-coil conformation; sequence LSSYEEKENLFKEQVGQLRQR. A helical membrane pass occupies residues 689–709; that stretch reads PPAWTVLLLAILGYNEFIFLL. Over 710–712 the chain is Lumenal; the sequence is RNP. A helical transmembrane segment spans residues 713–733; the sequence is LYLLGLFVAFVVSYAAWLQYD. At 734–823 the chain is on the cytoplasmic side; sequence ITAYFRHGTL…SVGSNSDDES (90 aa). The interval 770–823 is disordered; the sequence is NQKSSSHPPRHRPPLHPQSFRNQAQQQSQAQVQYQAPSSLSSSSSVGSNSDDES. Low complexity predominate over residues 786–823; the sequence is PQSFRNQAQQQSQAQVQYQAPSSLSSSSSVGSNSDDES.

It belongs to the TRAFAC class dynamin-like GTPase superfamily. GB1/RHD3 GTPase family. RHD3 subfamily.

It localises to the endoplasmic reticulum membrane. Its function is as follows. Probable GTP-binding protein that may be involved in cell development. In Oryza sativa subsp. japonica (Rice), this protein is Protein ROOT HAIR DEFECTIVE 3 homolog 2.